The chain runs to 375 residues: Chaperone protein DnaJ (375 aa).

One can recognise a J domain in the interval 5–70 (DYYEVLEISR…QKRQAYDRFG (66 aa)). A CR-type zinc finger spans residues 133–211 (GKEVTIQIPS…CHGHGRVRRN (79 aa)). Zn(2+) is bound by residues cysteine 146, cysteine 149, cysteine 163, cysteine 166, cysteine 185, cysteine 188, cysteine 199, and cysteine 202. CXXCXGXG motif repeat units lie at residues 146–153 (CEVCRGSG), 163–170 (CATCGGRG), 185–192 (CPQCNGSG), and 199–206 (CTNCHGHG).

Belongs to the DnaJ family. Homodimer. It depends on Zn(2+) as a cofactor.

It localises to the cytoplasm. Participates actively in the response to hyperosmotic and heat shock by preventing the aggregation of stress-denatured proteins and by disaggregating proteins, also in an autonomous, DnaK-independent fashion. Unfolded proteins bind initially to DnaJ; upon interaction with the DnaJ-bound protein, DnaK hydrolyzes its bound ATP, resulting in the formation of a stable complex. GrpE releases ADP from DnaK; ATP binding to DnaK triggers the release of the substrate protein, thus completing the reaction cycle. Several rounds of ATP-dependent interactions between DnaJ, DnaK and GrpE are required for fully efficient folding. Also involved, together with DnaK and GrpE, in the DNA replication of plasmids through activation of initiation proteins. The protein is Chaperone protein DnaJ of Acidithiobacillus ferrooxidans (strain ATCC 23270 / DSM 14882 / CIP 104768 / NCIMB 8455) (Ferrobacillus ferrooxidans (strain ATCC 23270)).